Consider the following 376-residue polypeptide: Spermidine/putrescine import ATP-binding protein PotA (376 aa).

An ABC transporter domain is found at 6–236; sequence INIVNVNKSF…PADTFVADFL (231 aa). Residue 38–45 participates in ATP binding; it reads GPSGCGKT.

The protein belongs to the ABC transporter superfamily. Spermidine/putrescine importer (TC 3.A.1.11.1) family. The complex is composed of two ATP-binding proteins (PotA), two transmembrane proteins (PotB and PotC) and a solute-binding protein (PotD).

Its subcellular location is the cell inner membrane. It catalyses the reaction ATP + H2O + polyamine-[polyamine-binding protein]Side 1 = ADP + phosphate + polyamineSide 2 + [polyamine-binding protein]Side 1.. Part of the ABC transporter complex PotABCD involved in spermidine/putrescine import. Responsible for energy coupling to the transport system. This Fusobacterium nucleatum subsp. nucleatum (strain ATCC 25586 / DSM 15643 / BCRC 10681 / CIP 101130 / JCM 8532 / KCTC 2640 / LMG 13131 / VPI 4355) protein is Spermidine/putrescine import ATP-binding protein PotA.